The chain runs to 241 residues: Phycocyanobilin:ferredoxin oxidoreductase (241 aa).

This sequence belongs to the HY2 family.

It carries out the reaction (2R,3Z)-phycocyanobilin + 4 oxidized [2Fe-2S]-[ferredoxin] = biliverdin IXalpha + 4 reduced [2Fe-2S]-[ferredoxin] + 4 H(+). In terms of biological role, catalyzes the four-electron reduction of biliverdin IX-alpha (2-electron reduction at both the A and D rings); the reaction proceeds via an isolatable 2-electron intermediate, 181,182-dihydrobiliverdin. The sequence is that of Phycocyanobilin:ferredoxin oxidoreductase from Prochlorococcus marinus (strain MIT 9312).